We begin with the raw amino-acid sequence, 470 residues long: Sugar transporter ERD6-like 8 (470 aa).

Residues 1–16 (METRKDDMEKRNDKSE) show a composition bias toward basic and acidic residues. The interval 1-24 (METRKDDMEKRNDKSEPLLLPENG) is disordered. 12 helical membrane-spanning segments follow: residues 33-53 (WMVYLSTIIAVCGSYEFGTCV), 73-93 (QFSVFGSILNMGAVLGAITSG), 110-130 (VISAIGWLIIYLAKGDVPLDF), 133-153 (FLTGYGCGTLSFVVPVFIAEI), 164-184 (TLNQLFIVIGLASMFLIGAVV), 188-208 (TLALTGVAPCVVLFFGTWFIP), 270-290 (FVIVGVGLMFFQQFVGINGVI), 307-327 (GSILYSIEQVVLTALGATLLI), 335-355 (LLMASAVGMLIGCLLIGNSFL), 373-393 (GVLVYIGSFSIGMGAIPWVIM), 409-429 (VTVVNWLSSWLVSFTFNFLMI), and 434-454 (GTFYVYGGVCVLAIIFIAKLV).

It belongs to the major facilitator superfamily. Sugar transporter (TC 2.A.1.1) family.

The protein resides in the membrane. Functionally, sugar transporter. The polypeptide is Sugar transporter ERD6-like 8 (Arabidopsis thaliana (Mouse-ear cress)).